A 429-amino-acid chain; its full sequence is Autophagy-related protein 18 (429 aa).

WD repeat units lie at residues 1-36, 69-114, 139-182, 185-225, 230-269, 309-355, and 367-407; these read MAMN…KSYE, KRQS…LLYT, PLPQ…AINV, AHRS…KLYQ, SMPS…SSPD, KHNG…AWFK, and VNNG…GGEG. Positions 226 to 230 match the L/FRRG motif motif; sequence FRRGS. A compositionally biased stretch (low complexity) spans 262 to 275; it reads SHPTSSPDASPSSP. The segment at 262-308 is disordered; sequence SHPTSSPDASPSSPVGRDRSLSQSSSGYSPDRGDLTGDVGSSDFPAR.

The protein belongs to the WD repeat PROPPIN family. Component of the PI(3,5)P2 regulatory complex.

It localises to the preautophagosomal structure membrane. Its subcellular location is the vacuole membrane. The protein resides in the endosome membrane. Its function is as follows. The PI(3,5)P2 regulatory complex regulates both the synthesis and turnover of phosphatidylinositol 3,5-bisphosphate (PtdIns(3,5)P2). Necessary for proper vacuole morphology. Plays an important role in osmotically-induced vacuole fragmentation. Required for cytoplasm to vacuole transport (Cvt) vesicle formation, pexophagy and starvation-induced autophagy. Involved in correct atg9 trafficking to the pre-autophagosomal structure. Might also be involved in premeiotic DNA replication. The chain is Autophagy-related protein 18 (atg18) from Neosartorya fischeri (strain ATCC 1020 / DSM 3700 / CBS 544.65 / FGSC A1164 / JCM 1740 / NRRL 181 / WB 181) (Aspergillus fischerianus).